Here is a 592-residue protein sequence, read N- to C-terminus: Probable tubulin polyglutamylase TTLL2 (592 aa).

2 disordered regions span residues 1-23 and 51-77; these read MRGR…TTTP and GVSI…MAED. Residues 7-23 are compositionally biased toward polar residues; it reads CSSTQSQALGSLRTTTP. The 344-residue stretch at 84-427 folds into the TTL domain; that stretch reads LKPLVFRVDE…NGLRNEGREA (344 aa). ATP is bound by residues K212, 218 to 219, 240 to 243, and 253 to 255; these read RG, QKYI, and KCD. Residue R218 coordinates a protein. R279 provides a ligand contact to L-glutamate. 298 to 299 contributes to the ATP binding site; the sequence is TN. L-glutamate is bound by residues S301 and K321. Mg(2+) contacts are provided by D373, E386, and N388. L-glutamate is bound at residue K404.

This sequence belongs to the tubulin--tyrosine ligase family. Mg(2+) serves as cofactor. As to expression, testis.

Functionally, probable tubulin polyglutamylase that generates side chains of glutamate on the gamma-carboxyl group of specific glutamate residues within the C-terminal tail of target proteins. Similar to TTLL1, may acquire enzymatic activity only in complex with other proteins as it is most likely lacking domains important for autonomous activity. Probably involved in the side-chain initiation step of the polyglutamylation reaction rather than the elongation step. In Homo sapiens (Human), this protein is Probable tubulin polyglutamylase TTLL2.